Reading from the N-terminus, the 78-residue chain is Short neurotoxin SNTX6 (78 aa).

The first 21 residues, 1–21 (MKTLLLTFLVVTIVCLDLGYT), serve as a signal peptide directing secretion. 4 disulfides stabilise this stretch: cysteine 24/cysteine 40, cysteine 33/cysteine 58, cysteine 62/cysteine 70, and cysteine 71/cysteine 76.

Belongs to the three-finger toxin family. Short-chain subfamily. As to expression, expressed by the venom gland.

The protein localises to the secreted. In terms of biological role, this three-finger toxin binds and inhibits the nicotinic acetylcholine receptor (nAChR). The protein is Short neurotoxin SNTX6 of Ophiophagus hannah (King cobra).